Here is a 261-residue protein sequence, read N- to C-terminus: Phosphoribosylaminoimidazole-succinocarboxamide synthase (261 aa).

This sequence belongs to the SAICAR synthetase family.

It catalyses the reaction 5-amino-1-(5-phospho-D-ribosyl)imidazole-4-carboxylate + L-aspartate + ATP = (2S)-2-[5-amino-1-(5-phospho-beta-D-ribosyl)imidazole-4-carboxamido]succinate + ADP + phosphate + 2 H(+). The protein operates within purine metabolism; IMP biosynthesis via de novo pathway; 5-amino-1-(5-phospho-D-ribosyl)imidazole-4-carboxamide from 5-amino-1-(5-phospho-D-ribosyl)imidazole-4-carboxylate: step 1/2. This is Phosphoribosylaminoimidazole-succinocarboxamide synthase from Novosphingobium aromaticivorans (strain ATCC 700278 / DSM 12444 / CCUG 56034 / CIP 105152 / NBRC 16084 / F199).